A 276-amino-acid polypeptide reads, in one-letter code: Putative pyruvate, phosphate dikinase regulatory protein (276 aa).

Residue 152-159 (GISRTSKT) coordinates ADP.

It belongs to the pyruvate, phosphate/water dikinase regulatory protein family. PDRP subfamily.

The catalysed reaction is N(tele)-phospho-L-histidyl/L-threonyl-[pyruvate, phosphate dikinase] + ADP = N(tele)-phospho-L-histidyl/O-phospho-L-threonyl-[pyruvate, phosphate dikinase] + AMP + H(+). It carries out the reaction N(tele)-phospho-L-histidyl/O-phospho-L-threonyl-[pyruvate, phosphate dikinase] + phosphate + H(+) = N(tele)-phospho-L-histidyl/L-threonyl-[pyruvate, phosphate dikinase] + diphosphate. Functionally, bifunctional serine/threonine kinase and phosphorylase involved in the regulation of the pyruvate, phosphate dikinase (PPDK) by catalyzing its phosphorylation/dephosphorylation. In Staphylococcus carnosus (strain TM300), this protein is Putative pyruvate, phosphate dikinase regulatory protein.